The following is a 720-amino-acid chain: Hexanoyl-CoA synthase (720 aa).

A helical membrane pass occupies residues 242 to 262 (VDAVVIYLAIVLAGYVVVSIA). 290-293 (RGKK) lines the CoA pocket. ATP-binding positions include 477–479 (GEA), 499–504 (EMCGGT), glutamate 585, and arginine 607. CoA is bound at residue glycine 615. Lysine 618 contacts ATP. Glutamine 681 contributes to the CoA binding site.

It belongs to the ATP-dependent AMP-binding enzyme family. Mg(2+) is required as a cofactor. Accumulates in glandular trichomes, especially in female flowers. Present at low levels in roots, stems and leaves.

It localises to the cytoplasm. The protein resides in the cytosol. The protein localises to the membrane. It catalyses the reaction hexanoate + ATP + CoA = hexanoyl-CoA + AMP + diphosphate. It participates in secondary metabolite biosynthesis; terpenoid biosynthesis. Its activity is regulated as follows. Inhibitied by high CoA concentrations. In terms of biological role, involved in the biosynthesis of cannabinoids-related terpenophenolic natural products, which have pharmacological activity. Acyl-activating enzyme that catalyzes the conversion of hexanoic acid to hexanoyl-CoA, precursor of the cannabinoid pathway. Can also activate other fatty acids including heptanoate, octanoate and nonanoate. The chain is Hexanoyl-CoA synthase from Cannabis sativa (Hemp).